The chain runs to 709 residues: NAD(P)H-quinone oxidoreductase subunit 5, chloroplastic (709 aa).

14 helical membrane passes run 9–29 (WIIPFVPLPIPIKIGMGLLLF), 40–60 (WAFPNILLLSIVMIFSVDLSI), 89–109 (IDSLTSIMSILITTVGIFVLI), 125–145 (FAYMSLFNTSMLGLLTXSNLI), 147–167 (IYXFWELVGMCSYLLIGFWFT), 219–239 (NEVHFLFVTLCASLLFAGAVA), 257–277 (PTPISALIHAATMVAAGIFLV), 280–300 (LLPLFIVIPYIMNLISLIGII), 327–347 (LGYMMLALGMGSYRAALFHLI), 354–374 (ALLFLGSGSIIHSMEAIVGYS), 396–416 (IAFLVGTLSLCGIPPLACFWS), 425–445 (WLYSPIFAIIAWSTAGLTASY), 540–560 (LFPMLILVLFTLFVGAIAIPF), and 594–614 (FLTNATFSVSIASFGIFTAFL).

The protein belongs to the complex I subunit 5 family. As to quaternary structure, NDH is composed of at least 16 different subunits, 5 of which are encoded in the nucleus.

It localises to the plastid. The protein resides in the chloroplast thylakoid membrane. It carries out the reaction a plastoquinone + NADH + (n+1) H(+)(in) = a plastoquinol + NAD(+) + n H(+)(out). It catalyses the reaction a plastoquinone + NADPH + (n+1) H(+)(in) = a plastoquinol + NADP(+) + n H(+)(out). In terms of biological role, NDH shuttles electrons from NAD(P)H:plastoquinone, via FMN and iron-sulfur (Fe-S) centers, to quinones in the photosynthetic chain and possibly in a chloroplast respiratory chain. The immediate electron acceptor for the enzyme in this species is believed to be plastoquinone. Couples the redox reaction to proton translocation, and thus conserves the redox energy in a proton gradient. The protein is NAD(P)H-quinone oxidoreductase subunit 5, chloroplastic (ndhF) of Pachira aquatica (Guiana chestnut).